The chain runs to 141 residues: Large ribosomal subunit protein bL17 (141 aa).

It belongs to the bacterial ribosomal protein bL17 family. Part of the 50S ribosomal subunit. Contacts protein L32.

This is Large ribosomal subunit protein bL17 from Maridesulfovibrio salexigens (strain ATCC 14822 / DSM 2638 / NCIMB 8403 / VKM B-1763) (Desulfovibrio salexigens).